Here is a 431-residue protein sequence, read N- to C-terminus: Histidinol dehydrogenase (431 aa).

NAD(+) is bound by residues Tyr-127, Gln-189, and Asn-212. The substrate site is built by Ser-237, Gln-259, and His-262. Zn(2+)-binding residues include Gln-259 and His-262. Catalysis depends on proton acceptor residues Glu-326 and His-327. Substrate-binding residues include His-327, Asp-360, Glu-414, and His-419. Zn(2+) is bound at residue Asp-360. His-419 contacts Zn(2+).

It belongs to the histidinol dehydrogenase family. Zn(2+) is required as a cofactor.

It carries out the reaction L-histidinol + 2 NAD(+) + H2O = L-histidine + 2 NADH + 3 H(+). The protein operates within amino-acid biosynthesis; L-histidine biosynthesis; L-histidine from 5-phospho-alpha-D-ribose 1-diphosphate: step 9/9. Its function is as follows. Catalyzes the sequential NAD-dependent oxidations of L-histidinol to L-histidinaldehyde and then to L-histidine. The polypeptide is Histidinol dehydrogenase (Xanthomonas euvesicatoria pv. vesicatoria (strain 85-10) (Xanthomonas campestris pv. vesicatoria)).